Here is an 88-residue protein sequence, read N- to C-terminus: Defensin-like protein 267 (88 aa).

The first 23 residues, 1 to 23 (MMLSKVVLLALLLSLSCLWVAKA), serve as a signal peptide directing secretion. Intrachain disulfides connect Cys-45-Cys-63, Cys-51-Cys-68, and Cys-55-Cys-70.

The protein belongs to the DEFL family.

The protein localises to the secreted. The sequence is that of Defensin-like protein 267 from Arabidopsis thaliana (Mouse-ear cress).